Reading from the N-terminus, the 255-residue chain is NAD-dependent protein deacylase (255 aa).

The region spanning 1-253 (MEFSDELLAS…PLLLQALRRS (253 aa)) is the Deacetylase sirtuin-type domain. 22 to 42 (GAGVSAESGIPTFRDALTGFW) serves as a coordination point for NAD(+). Tyr67 and Arg70 together coordinate substrate. Position 101–104 (101–104 (QNVD)) interacts with NAD(+). The active-site Proton acceptor is His119. Residues Cys127, Cys130, Cys155, and Cys158 each coordinate Zn(2+). NAD(+) is bound by residues 195-197 (GTS), 221-223 (NPA), and Ala239.

Belongs to the sirtuin family. Class III subfamily. It depends on Zn(2+) as a cofactor.

Its subcellular location is the cytoplasm. The catalysed reaction is N(6)-acetyl-L-lysyl-[protein] + NAD(+) + H2O = 2''-O-acetyl-ADP-D-ribose + nicotinamide + L-lysyl-[protein]. It catalyses the reaction N(6)-succinyl-L-lysyl-[protein] + NAD(+) + H2O = 2''-O-succinyl-ADP-D-ribose + nicotinamide + L-lysyl-[protein]. Its function is as follows. NAD-dependent lysine deacetylase and desuccinylase that specifically removes acetyl and succinyl groups on target proteins. Modulates the activities of several proteins which are inactive in their acylated form. This Methylococcus capsulatus (strain ATCC 33009 / NCIMB 11132 / Bath) protein is NAD-dependent protein deacylase.